We begin with the raw amino-acid sequence, 89 residues long: Small ribosomal subunit protein uS15 (89 aa).

It belongs to the universal ribosomal protein uS15 family. In terms of assembly, part of the 30S ribosomal subunit. Forms a bridge to the 50S subunit in the 70S ribosome, contacting the 23S rRNA.

Its function is as follows. One of the primary rRNA binding proteins, it binds directly to 16S rRNA where it helps nucleate assembly of the platform of the 30S subunit by binding and bridging several RNA helices of the 16S rRNA. Functionally, forms an intersubunit bridge (bridge B4) with the 23S rRNA of the 50S subunit in the ribosome. This is Small ribosomal subunit protein uS15 from Mycobacterium leprae (strain Br4923).